Here is a 475-residue protein sequence, read N- to C-terminus: Ribulose bisphosphate carboxylase large chain (475 aa).

Substrate is bound by residues N123 and T173. The active-site Proton acceptor is the K175. K177 is a binding site for substrate. Residues K201, D203, and E204 each coordinate Mg(2+). K201 bears the N6-carboxylysine mark. H294 (proton acceptor) is an active-site residue. 3 residues coordinate substrate: R295, H327, and S379.

Belongs to the RuBisCO large chain family. Type I subfamily. In terms of assembly, heterohexadecamer of 8 large chains and 8 small chains. The cofactor is Mg(2+).

It is found in the plastid. It localises to the cyanelle. It carries out the reaction 2 (2R)-3-phosphoglycerate + 2 H(+) = D-ribulose 1,5-bisphosphate + CO2 + H2O. The enzyme catalyses D-ribulose 1,5-bisphosphate + O2 = 2-phosphoglycolate + (2R)-3-phosphoglycerate + 2 H(+). Functionally, ruBisCO catalyzes two reactions: the carboxylation of D-ribulose 1,5-bisphosphate, the primary event in carbon dioxide fixation, as well as the oxidative fragmentation of the pentose substrate in the photorespiration process. Both reactions occur simultaneously and in competition at the same active site. The chain is Ribulose bisphosphate carboxylase large chain from Cyanophora paradoxa.